The following is a 291-amino-acid chain: Nucleotide-binding protein lwe2422 (291 aa).

Residue glycine 13 to threonine 20 coordinates ATP. Residue aspartate 63–glycine 66 participates in GTP binding.

Belongs to the RapZ-like family.

Displays ATPase and GTPase activities. The chain is Nucleotide-binding protein lwe2422 from Listeria welshimeri serovar 6b (strain ATCC 35897 / DSM 20650 / CCUG 15529 / CIP 8149 / NCTC 11857 / SLCC 5334 / V8).